We begin with the raw amino-acid sequence, 73 residues long: Pelophylaxin-1 (73 aa).

The first 22 residues, Met-1–Cys-22, serve as a signal peptide directing secretion. Positions Glu-23–Ile-41 are excised as a propeptide. Cys-67 and Cys-73 form a disulfide bridge.

In terms of tissue distribution, expressed by the skin glands.

The protein localises to the secreted. Functionally, antimicrobial peptide. This chain is Pelophylaxin-1, found in Pelophylax fukienensis (Fukien gold-striped pond frog).